The sequence spans 30 residues: Thermophilic aminopeptidase 1 alpha chain (30 aa).

Belongs to the peptidase M42 family. In terms of assembly, 12 chains of two different but homologous types, alpha and beta, which can combine in various ratios. Requires a divalent metal cation as cofactor.

In terms of biological role, metalloenzyme of broad specificity, releasing all N-terminal amino acids. This chain is Thermophilic aminopeptidase 1 alpha chain, found in Geobacillus stearothermophilus (Bacillus stearothermophilus).